We begin with the raw amino-acid sequence, 964 residues long: Probable outer membrane protein PmpE (964 aa).

An N-terminal signal peptide occupies residues 1-18 (MKKAFFFFLIGNSLSGLA). The region spanning 683-964 (LTPSGHPFWG…YLNGEIALRF (282 aa)) is the Autotransporter domain.

This sequence belongs to the PMP outer membrane protein family.

It localises to the secreted. The protein resides in the cell wall. Its subcellular location is the cell outer membrane. This chain is Probable outer membrane protein PmpE (pmpE), found in Chlamydia trachomatis serovar D (strain ATCC VR-885 / DSM 19411 / UW-3/Cx).